The primary structure comprises 501 residues: Bifunctional pantoate ligase/cytidylate kinase (501 aa).

The pantoate--beta-alanine ligase stretch occupies residues 1–264 (MLSTQAELAA…CGTTRLIDHS (264 aa)). Residue 25-32 (MGGLHQGH) coordinates ATP. His-32 (proton donor) is an active-site residue. Gln-55 is a (R)-pantoate binding site. Residue Gln-55 participates in beta-alanine binding. 144-147 (GEKD) contacts ATP. Gln-150 serves as a coordination point for (R)-pantoate. ATP is bound by residues Val-173 and 181 to 184 (LSSR). The interval 265–501 (FLMTRQPLVA…PEEAWPTPAG (237 aa)) is cytidylate kinase.

The protein in the N-terminal section; belongs to the pantothenate synthetase family. In the C-terminal section; belongs to the cytidylate kinase family. Type 1 subfamily.

The protein resides in the cytoplasm. It catalyses the reaction (R)-pantoate + beta-alanine + ATP = (R)-pantothenate + AMP + diphosphate + H(+). It carries out the reaction CMP + ATP = CDP + ADP. The catalysed reaction is dCMP + ATP = dCDP + ADP. It functions in the pathway cofactor biosynthesis; (R)-pantothenate biosynthesis; (R)-pantothenate from (R)-pantoate and beta-alanine: step 1/1. In terms of biological role, catalyzes the condensation of pantoate with beta-alanine in an ATP-dependent reaction via a pantoyl-adenylate intermediate. Its function is as follows. Catalyzes the transfer of a phosphate group from ATP to either CMP or dCMP to form CDP or dCDP and ADP, respectively. This is Bifunctional pantoate ligase/cytidylate kinase from Parasynechococcus marenigrum (strain WH8102).